The chain runs to 578 residues: NADPH oxidase 4 (578 aa).

At 1 to 16 the chain is on the cytoplasmic side; sequence MAVSWRSWLANEGVKH. A helical transmembrane segment spans residues 17 to 37; the sequence is LCLFIWLSMNVLLFWKTFLLY. At 38-62 the chain is on the extracellular side; sequence NQGPEYHYLHQMLGLGLCLSRASAS. The region spanning 58-303 is the Ferric oxidoreductase domain; it reads RASASVLNLN…YCAERLYRYI (246 aa). A helical membrane pass occupies residues 63 to 83; the sequence is VLNLNCSLILLPMCRTLLAYL. Topologically, residues 84–103 are cytoplasmic; the sequence is RGSQKVPSRRTRRLLDKSRT. A helical membrane pass occupies residues 104–124; the sequence is FHITCGVTICIFSGVHVAAHL. The Extracellular segment spans residues 125-154; the sequence is VNALNFSVNYSEDFVELNAARYRDEDPRKL. N-linked (GlcNAc...) asparagine glycosylation is present at asparagine 133. A helical membrane pass occupies residues 155–175; the sequence is LFTTVPGLTGVCMVVVLFLMI. Residues 176–188 are Cytoplasmic-facing; the sequence is TASTYAIRVSNYD. A helical transmembrane segment spans residues 189–209; sequence IFWYTHNLFFVFYMLLTLHVS. The Extracellular segment spans residues 210-424; it reads GGLLKYQTNL…SPFEESLNYE (215 aa). An E-loop; essential for H2O2 generating catalytic activity region spans residues 218–273; it reads NLDTHPPGCISLNRTSSQNISLPEYFSEHFHEPFPEGFSKPEEFTQNTFVKICMEE. Asparagine 230 carries N-linked (GlcNAc...) asparagine glycosylation. The tract at residues 248-575 is mediates interaction with TLR4; it reads HEPFPEGFSK…YGTRFEYNKE (328 aa). Positions 304 to 419 constitute an FAD-binding FR-type domain; sequence RSNKPVTIIS…DGPFGSPFEE (116 aa). Residues 425–445 form a helical membrane-spanning segment; that stretch reads VSLCVAGGIGVTPFASILNTL. Topologically, residues 446–578 are cytoplasmic; it reads LDDWKPYKLR…RFEYNKESFS (133 aa).

As to quaternary structure, interacts with, relocalizes and stabilizes CYBA/p22phox. Interacts with TLR4. Interacts with protein disulfide isomerase. Interacts with PPP1R15A. Interacts with LRRC8A; this interaction prevents the ubiquitin-mediated degradation of LRRC8A. Requires heme as cofactor. Post-translationally, N-glycosylation is required for the function.

Its subcellular location is the cytoplasm. The protein resides in the endoplasmic reticulum membrane. It localises to the cell membrane. The protein localises to the cell junction. It is found in the focal adhesion. Its subcellular location is the nucleus. The enzyme catalyses NADPH + 2 O2 = 2 superoxide + NADP(+) + H(+). It catalyses the reaction NADPH + O2 + H(+) = H2O2 + NADP(+). Its activity is regulated as follows. Activated by insulin. Inhibited by diphenylene iodonium. Inhibited by plumbagin. Activated by phorbol 12-myristate 13-acetate (PMA). Its function is as follows. NADPH oxidase that catalyzes predominantly the reduction of oxygen to H2O2. Can also catalyze to a smaller extent, the reduction of oxygen to superoxide. May function as an oxygen sensor regulating the KCNK3/TASK-1 potassium channel and HIF1A activity. May regulate insulin signaling cascade. May play a role in apoptosis, bone resorption and lipolysaccharide-mediated activation of NFKB. May produce superoxide in the nucleus and play a role in regulating gene expression upon cell stimulation. Promotes ferroptosis, reactive oxygen species production and reduced glutathione (GSH) levels by activating NLRP3 inflammasome activation and cytokine release. The protein is NADPH oxidase 4 (NOX4) of Pongo abelii (Sumatran orangutan).